Consider the following 278-residue polypeptide: Shikimate dehydrogenase (NADP(+)) (278 aa).

Shikimate is bound by residues 14-16 (SKS) and Thr-61. Lys-65 (proton acceptor) is an active-site residue. Positions 86 and 102 each coordinate shikimate. Residues 127-131 (GAGGA), 151-156 (NRTASK), and Met-221 each bind NADP(+). Tyr-223 is a shikimate binding site. Gly-245 contributes to the NADP(+) binding site.

The protein belongs to the shikimate dehydrogenase family. As to quaternary structure, homodimer.

The catalysed reaction is shikimate + NADP(+) = 3-dehydroshikimate + NADPH + H(+). Its pathway is metabolic intermediate biosynthesis; chorismate biosynthesis; chorismate from D-erythrose 4-phosphate and phosphoenolpyruvate: step 4/7. Involved in the biosynthesis of the chorismate, which leads to the biosynthesis of aromatic amino acids. Catalyzes the reversible NADPH linked reduction of 3-dehydroshikimate (DHSA) to yield shikimate (SA). This Saccharophagus degradans (strain 2-40 / ATCC 43961 / DSM 17024) protein is Shikimate dehydrogenase (NADP(+)).